Reading from the N-terminus, the 301-residue chain is tRNA pseudouridine synthase B (301 aa).

The active-site Nucleophile is the Asp-47.

This sequence belongs to the pseudouridine synthase TruB family. Type 1 subfamily.

It carries out the reaction uridine(55) in tRNA = pseudouridine(55) in tRNA. Its function is as follows. Responsible for synthesis of pseudouridine from uracil-55 in the psi GC loop of transfer RNAs. The sequence is that of tRNA pseudouridine synthase B from Cereibacter sphaeroides (strain ATCC 17023 / DSM 158 / JCM 6121 / CCUG 31486 / LMG 2827 / NBRC 12203 / NCIMB 8253 / ATH 2.4.1.) (Rhodobacter sphaeroides).